The chain runs to 225 residues: UPF0758 protein XC_3944 (225 aa).

The MPN domain maps to 102 to 224; that stretch reads ALSDPSSVGR…PVSLAERGWV (123 aa). 3 residues coordinate Zn(2+): His-173, His-175, and Asp-186. The JAMM motif motif lies at 173–186; the sequence is HNHPSGNPEPSEAD.

It belongs to the UPF0758 family.

This is UPF0758 protein XC_3944 from Xanthomonas campestris pv. campestris (strain 8004).